A 535-amino-acid chain; its full sequence is Dimethylaniline monooxygenase [N-oxide-forming] 2 (535 aa).

Alanine 2 carries the N-acetylalanine modification. Residues 9–13 (GAGVS), glutamate 32, 40–41 (LW), and 61–62 (NT) each bind FAD. Residues 60–61 (TN) and 195–198 (SASD) each bind NADP(+). Lysine 492 is covalently cross-linked (Glycyl lysine isopeptide (Lys-Gly) (interchain with G-Cter in SUMO)). The helical transmembrane segment at 510 to 530 (LSASFLMKILALVAVFVAFFS) threads the bilayer.

The protein belongs to the FMO family. Requires FAD as cofactor. It depends on Mg(2+) as a cofactor. Lung.

It is found in the microsome membrane. It localises to the endoplasmic reticulum membrane. In terms of biological role, catalyzes the oxidative metabolism of numerous xenobiotics, including mainly therapeutic drugs and insecticides that contain a soft nucleophile, most commonly nitrogen and sulfur and participates to their bioactivation. The polypeptide is Dimethylaniline monooxygenase [N-oxide-forming] 2 (Cavia porcellus (Guinea pig)).